A 299-amino-acid chain; its full sequence is tRNA pseudouridine synthase A (299 aa).

Aspartate 67 functions as the Nucleophile in the catalytic mechanism. Position 125 (tyrosine 125) interacts with substrate.

It belongs to the tRNA pseudouridine synthase TruA family. In terms of assembly, homodimer.

The enzyme catalyses uridine(38/39/40) in tRNA = pseudouridine(38/39/40) in tRNA. Formation of pseudouridine at positions 38, 39 and 40 in the anticodon stem and loop of transfer RNAs. The protein is tRNA pseudouridine synthase A of Parasynechococcus marenigrum (strain WH8102).